We begin with the raw amino-acid sequence, 576 residues long: V-type ATP synthase alpha chain (576 aa).

238 to 245 (GPFGAGKT) provides a ligand contact to ATP.

Belongs to the ATPase alpha/beta chains family.

It catalyses the reaction ATP + H2O + 4 H(+)(in) = ADP + phosphate + 5 H(+)(out). Its function is as follows. Produces ATP from ADP in the presence of a proton gradient across the membrane. The V-type alpha chain is a catalytic subunit. The protein is V-type ATP synthase alpha chain of Borrelia duttonii (strain Ly).